Consider the following 236-residue polypeptide: MTKRYWNINLEEMMKAGVHFGHGTKKWNPKMAPYISAKRKGIHITNLTRTARFLLEACDLVFDAASRGKQFLIVGTKNKAANLVAWAAIKARCHYVNKKWLGGMLTNWSTTETRLHKFRDLRTEQKTGRLNRLPKRDAAMLKRQLSHLQTYLGGIKYMTGLPDIVIIVDQHEEYTALRECITLGIPTICLIDTNCDPDLADISIPANDDAISSIRLILNKLVFAICEGRSSYIRNP.

This sequence belongs to the universal ribosomal protein uS2 family.

It localises to the plastid. The protein resides in the chloroplast. This chain is Small ribosomal subunit protein uS2c (rps2), found in Panax ginseng (Korean ginseng).